Consider the following 139-residue polypeptide: Large ribosomal subunit protein uL16 (139 aa).

The interval 1–23 (MLQPARTKYRKMHKGRMPGSAHR) is disordered. Basic residues predominate over residues 7 to 16 (TKYRKMHKGR).

This sequence belongs to the universal ribosomal protein uL16 family. Part of the 50S ribosomal subunit.

Its function is as follows. Binds 23S rRNA and is also seen to make contacts with the A and possibly P site tRNAs. The sequence is that of Large ribosomal subunit protein uL16 from Myxococcus xanthus (strain DK1622).